Here is a 122-residue protein sequence, read N- to C-terminus: MIQVESTLQVADNSGAKKVACIKVLGGSHRRYATVGDIIMVSVKEAMPHCKVKKGDVMQAVIVRTAKEVRRADGSYIKFDSNAAVLLNKQGEPVGTRIFGPVARELRARNFMKIVSLAPEVL.

This sequence belongs to the universal ribosomal protein uL14 family. In terms of assembly, part of the 50S ribosomal subunit. Forms a cluster with proteins L3 and L19. In the 70S ribosome, L14 and L19 interact and together make contacts with the 16S rRNA in bridges B5 and B8.

Binds to 23S rRNA. Forms part of two intersubunit bridges in the 70S ribosome. In Nitratidesulfovibrio vulgaris (strain ATCC 29579 / DSM 644 / CCUG 34227 / NCIMB 8303 / VKM B-1760 / Hildenborough) (Desulfovibrio vulgaris), this protein is Large ribosomal subunit protein uL14.